A 303-amino-acid chain; its full sequence is Mitochondrial carrier homolog 2 (303 aa).

At alanine 2 the chain carries N-acetylalanine. Over 2-15 the chain is Mitochondrial intermembrane; it reads ADAASQVLLGSGLT. Solcar repeat units follow at residues 2 to 98 and 118 to 206; these read ADAA…YQEC and DRVI…VNTY. Residues 16 to 36 form a helical membrane-spanning segment; it reads ILSQPLMYVKVLIQVGYEPLA. Residues 37–77 are Cytoplasmic-facing; it reads PTVGRNIFGRQVCQLPGLFCYAQHIASIDGKRGLFTGLTPR. The chain crosses the membrane as a helical span at residues 78 to 92; that stretch reads LCSGVLGTVVHGKVL. The Mitochondrial intermembrane segment spans residues 93 to 135; sequence QHYQECDKAEESGSGNVQKEVSSSFDRVIKETTREMMARSAAT. The chain crosses the membrane as a helical span at residues 136–156; it reads LITHPFHVITLRSMVQFIGRE. Over 157–180 the chain is Cytoplasmic; the sequence is SKYCGLCDSIATIYREEGILGFFA. Residues 181–199 form a helical membrane-spanning segment; that stretch reads GLIPRLLGDIISLWLCNSL. The Mitochondrial intermembrane portion of the chain corresponds to 200–231; that stretch reads AYLVNTYALDSGVSTMNEMKSYSQAVTGFFAS. A helical transmembrane segment spans residues 232-252; that stretch reads MLTYPFVLVSNLMAVNNCGLA. Residues 253 to 280 lie on the Cytoplasmic side of the membrane; it reads GGCPPYAPIYSSWIDCWCMLQKEGNMSR. Residues 281 to 303 form a helical membrane-spanning segment; it reads GNSLFFRKVPFGKTYCCDLRMLI.

This sequence belongs to the mitochondrial carrier (TC 2.A.29) family. As to quaternary structure, interacts with p15BID.

It is found in the mitochondrion outer membrane. Its function is as follows. Protein insertase that mediates insertion of transmembrane proteins into the mitochondrial outer membrane. Catalyzes insertion of proteins with alpha-helical transmembrane regions, such as signal-anchored, tail-anchored and multi-pass membrane proteins. Does not mediate insertion of beta-barrel transmembrane proteins. Also acts as a receptor for the truncated form of pro-apoptotic BH3-interacting domain death agonist (p15 BID) and has therefore a critical function in apoptosis. Regulates the quiescence/cycling of hematopoietic stem cells (HSCs). Acts as a regulator of mitochondrial fusion, essential for the naive-to-primed interconversion of embryonic stem cells (ESCs). Acts as a regulator of lipid homeostasis and has a regulatory role in adipocyte differentiation and biology. This is Mitochondrial carrier homolog 2 (MTCH2) from Bos taurus (Bovine).